A 492-amino-acid chain; its full sequence is Citrate synthase, peroxisomal (492 aa).

Catalysis depends on residues His307, His346, and Asp402. Residues 469–492 (PAKVRSQDSYSSATTKRYSKVTSH) are disordered. Residues 475–484 (QDSYSSATTK) are compositionally biased toward polar residues.

It belongs to the citrate synthase family.

It is found in the peroxisome. The enzyme catalyses oxaloacetate + acetyl-CoA + H2O = citrate + CoA + H(+). It participates in carbohydrate metabolism; tricarboxylic acid cycle; isocitrate from oxaloacetate: step 1/2. Functionally, peroxisomal protein involved in the cellular biosynthesis of citrate, and required primarily for cell growth and modulation of multicellular development. The protein is Citrate synthase, peroxisomal (cshA) of Dictyostelium discoideum (Social amoeba).